We begin with the raw amino-acid sequence, 473 residues long: Cysteine protease ATG4A (473 aa).

The segment at 1–33 is disordered; that stretch reads MTSLPGRGVSPSSSDPLCEGNAAPSSSSSGQDL. Catalysis depends on C160, which acts as the Nucleophile. Active-site residues include D357 and H359.

This sequence belongs to the peptidase C54 family. In terms of assembly, interacts with ATG8.

It is found in the cytoplasm. The enzyme catalyses [protein]-C-terminal L-amino acid-glycyl-phosphatidylethanolamide + H2O = [protein]-C-terminal L-amino acid-glycine + a 1,2-diacyl-sn-glycero-3-phosphoethanolamine. Its function is as follows. Cysteine protease that plays a key role in autophagy by mediating both proteolytic activation and delipidation of ATG8 family proteins. The protease activity is required for proteolytic activation of ATG8 family proteins: cleaves the C-terminal amino acid of ATG8 proteins to reveal a C-terminal glycine. Exposure of the glycine at the C-terminus is essential for ATG8 proteins conjugation to phosphatidylethanolamine (PE) and insertion to membranes, which is necessary for autophagy. In addition to the protease activity, also mediates delipidation of PE-conjugated ATG8 proteins. This Oryza sativa subsp. indica (Rice) protein is Cysteine protease ATG4A (ATG4A).